A 343-amino-acid chain; its full sequence is Thromboxane A2 receptor (343 aa).

Residues 1–29 are Extracellular-facing; the sequence is MWPNASSLGPCFRPMNITLEERRLIASPW. Asn-4 and Asn-16 each carry an N-linked (GlcNAc...) asparagine glycan. The helical transmembrane segment at 30-52 threads the bilayer; it reads FAASFCLVGLASNLLALSVLMGA. The Cytoplasmic segment spans residues 53 to 66; it reads RQGSSQSRSSFLTF. The chain crosses the membrane as a helical span at residues 67 to 87; it reads LCGLVLTDFMGLLVTGAIVVT. Residues 88–106 lie on the Extracellular side of the membrane; that stretch reads QHFVLFEWQAVDPGCSLCH. Cys-105 and Cys-183 are joined by a disulfide. Residues 107–128 traverse the membrane as a helical segment; that stretch reads FMGVIMVFFGLCPLLLGAAMAS. The Cytoplasmic segment spans residues 129 to 149; sequence ERFLGITRPFSRPATASQRRA. A helical transmembrane segment spans residues 150–172; the sequence is WTTVGLVWASALALGLLPLLGVG. Over 173-193 the chain is Extracellular; that stretch reads HYTVQYPGSWCFLTLGTDPGD. Residues 194-219 traverse the membrane as a helical segment; that stretch reads VAFGLLFALLGSISVGMSFLLNTISV. The Cytoplasmic portion of the chain corresponds to 220 to 246; sequence ATLCHVYHGQATAQQRPRDCEVEMMVQ. The chain crosses the membrane as a helical span at residues 247–270; it reads LMGIMVVASICWMPLLVFIAQTVL. Over 271–289 the chain is Extracellular; the sequence is QSPPAMSPTGQLSRLTERQ. The chain crosses the membrane as a helical span at residues 290 to 311; it reads LLIYLRVATWNQILDPWVYILF. The Cytoplasmic portion of the chain corresponds to 312-343; that stretch reads RRAVIQRFYPRLSTRSRSLSLQPQLTRRSTIH. Phosphoserine is present on residues Ser-329 and Ser-331.

The protein belongs to the G-protein coupled receptor 1 family. In terms of assembly, interacts with RPGRIP1L. Interacts with RACK1; the interaction regulates TBXA2R cell surface expression.

It is found in the cell membrane. In terms of biological role, receptor for thromboxane A2 (TXA2), a potent stimulator of platelet aggregation. The activity of this receptor is mediated by a G-protein that activates a phosphatidylinositol-calcium second messenger system. In the kidney, the binding of TXA2 to glomerular TP receptors causes intense vasoconstriction. Activates phospholipase C and adenylyl cyclase. This is Thromboxane A2 receptor (TBXA2R) from Bos taurus (Bovine).